The following is a 354-amino-acid chain: Hyaluronan and proteoglycan link protein 1 (354 aa).

The propeptide occupies 1–15 (MKSLLLLVLISICGA). N-linked (GlcNAc...) asparagine glycans are attached at residues N21 and N56. Residues 38–152 (PRLLVEAEQA…EGLEDDTAVV (115 aa)) form the Ig-like V-type domain. Cystine bridges form between C61/C139, C181/C252, C205/C226, C279/C349, and C304/C325. 2 Link domains span residues 159–254 (VVFP…FCFT) and 259–351 (GRFY…YCFR).

This sequence belongs to the HAPLN family.

It localises to the secreted. It is found in the extracellular space. The protein localises to the extracellular matrix. Functionally, stabilizes the aggregates of proteoglycan monomers with hyaluronic acid in the extracellular cartilage matrix. The chain is Hyaluronan and proteoglycan link protein 1 (HAPLN1) from Equus caballus (Horse).